We begin with the raw amino-acid sequence, 330 residues long: Putative [LysW]-L-2-aminoadipate/[LysW]-L-glutamate phosphate reductase (330 aa).

NADP(+) is bound by residues 10-13 (SGYI) and 34-36 (SRR). C142 is a catalytic residue. N297 serves as a coordination point for NADP(+).

It belongs to the NAGSA dehydrogenase family. Type 1 subfamily. LysY sub-subfamily.

It is found in the cytoplasm. The catalysed reaction is [amino-group carrier protein]-C-terminal-N-(1-carboxy-5-oxopentan-1-yl)-L-glutamine + phosphate + NADP(+) = [amino-group carrier protein]-C-terminal-N-(1-carboxy-5-phosphooxy-5-oxopentan-1-yl)-L-glutamine + NADPH + H(+). The enzyme catalyses [amino-group carrier protein]-C-terminal-gamma-(L-glutamyl-5-semialdehyde)-L-glutamate + phosphate + NADP(+) = [amino-group carrier protein]-C-terminal-gamma-(5-phospho-L-glutamyl)-L-glutamate + NADPH + H(+). It functions in the pathway amino-acid biosynthesis; L-lysine biosynthesis via AAA pathway; L-lysine from L-alpha-aminoadipate (Thermus route): step 3/5. The protein operates within amino-acid biosynthesis; L-arginine biosynthesis. Functionally, involved in both the arginine and lysine biosynthetic pathways. This is Putative [LysW]-L-2-aminoadipate/[LysW]-L-glutamate phosphate reductase from Thermococcus kodakarensis (strain ATCC BAA-918 / JCM 12380 / KOD1) (Pyrococcus kodakaraensis (strain KOD1)).